Here is a 396-residue protein sequence, read N- to C-terminus: Probable sugar efflux transporter (396 aa).

12 consecutive transmembrane segments (helical) span residues 15-35 (VVTL…PVGL), 50-70 (VGIM…PFML), 81-101 (LICL…SWSF), 103-123 (VLVI…SITA), 136-156 (AQAL…GLPL), 170-190 (FFAI…LLPL), 209-229 (PALM…YTAY), 246-266 (FATA…VIFG), 275-295 (ALVS…LPAA), 299-319 (IHLG…GLGM), 333-353 (VAMA…ALVG), and 364-384 (MIGY…IIIF).

It belongs to the major facilitator superfamily. SotB (TC 2.A.1.2) family.

It is found in the cell inner membrane. In terms of biological role, involved in the efflux of sugars. The physiological role may be the reduction of the intracellular concentration of toxic sugars or sugar metabolites. This is Probable sugar efflux transporter from Escherichia coli O6:K15:H31 (strain 536 / UPEC).